A 192-amino-acid polypeptide reads, in one-letter code: FMN-dependent NADH:quinone oxidoreductase 1 (192 aa).

FMN contacts are provided by residues S9 and 15-17 (SYS).

Belongs to the azoreductase type 1 family. As to quaternary structure, homodimer. The cofactor is FMN.

It carries out the reaction 2 a quinone + NADH + H(+) = 2 a 1,4-benzosemiquinone + NAD(+). The catalysed reaction is N,N-dimethyl-1,4-phenylenediamine + anthranilate + 2 NAD(+) = 2-(4-dimethylaminophenyl)diazenylbenzoate + 2 NADH + 2 H(+). Functionally, quinone reductase that provides resistance to thiol-specific stress caused by electrophilic quinones. In terms of biological role, also exhibits azoreductase activity. Catalyzes the reductive cleavage of the azo bond in aromatic azo compounds to the corresponding amines. This is FMN-dependent NADH:quinone oxidoreductase 1 from Colwellia psychrerythraea (strain 34H / ATCC BAA-681) (Vibrio psychroerythus).